The chain runs to 420 residues: Carbohydrate sulfotransferase 1 (420 aa).

A topological domain (cytoplasmic) is located at residue Met1. The chain crosses the membrane as a helical; Signal-anchor for type II membrane protein span at residues 2–23; it reads QCSWKAVILLALVSIAIQYTAI. Residues 24 to 420 are Lumenal-facing; sequence RTFTAKPFHI…IEDKTFIPFL (397 aa). Asn64 is a glycosylation site (N-linked (GlcNAc...) asparagine). 77–83 contacts 3'-phosphoadenylyl sulfate; it reads TRSGSSF. 2 N-linked (GlcNAc...) asparagine glycosylation sites follow: Asn153 and Asn197. Residue 242–250 coordinates 3'-phosphoadenylyl sulfate; the sequence is RDPRGILSS. N-linked (GlcNAc...) asparagine glycosylation is found at Asn342 and Asn405.

This sequence belongs to the sulfotransferase 1 family. Gal/GlcNAc/GalNAc subfamily.

It is found in the golgi apparatus membrane. It carries out the reaction 3'-phosphoadenylyl sulfate + keratan = adenosine 3',5'-bisphosphate + keratan 6'-sulfate.. Its function is as follows. Sulfotransferase that utilizes 3'-phospho-5'-adenylyl sulfate (PAPS) as sulfonate donor to catalyze the transfer of sulfate to position 6 of galactose (Gal) residues of keratan. The protein is Carbohydrate sulfotransferase 1 (chst1) of Danio rerio (Zebrafish).